Reading from the N-terminus, the 186-residue chain is Large ribosomal subunit protein eL18 (186 aa).

It belongs to the eukaryotic ribosomal protein eL18 family. As to quaternary structure, component of the large ribosomal subunit. Mature ribosomes consist of a small (40S) and a large (60S) subunit. The 40S subunit contains about 32 different proteins and 1 molecule of RNA (18S). The 60S subunit contains 45 different proteins and 3 molecules of RNA (25S, 5.8S and 5S).

The protein resides in the cytoplasm. In terms of biological role, component of the ribosome, a large ribonucleoprotein complex responsible for the synthesis of proteins in the cell. The small ribosomal subunit (SSU) binds messenger RNAs (mRNAs) and translates the encoded message by selecting cognate aminoacyl-transfer RNA (tRNA) molecules. The large subunit (LSU) contains the ribosomal catalytic site termed the peptidyl transferase center (PTC), which catalyzes the formation of peptide bonds, thereby polymerizing the amino acids delivered by tRNAs into a polypeptide chain. The nascent polypeptides leave the ribosome through a tunnel in the LSU and interact with protein factors that function in enzymatic processing, targeting, and the membrane insertion of nascent chains at the exit of the ribosomal tunnel. In Candida albicans (strain SC5314 / ATCC MYA-2876) (Yeast), this protein is Large ribosomal subunit protein eL18.